A 141-amino-acid chain; its full sequence is Hemoglobin subunit alpha (141 aa).

The Globin domain maps to 1–141 (VLSPADKTNI…VSTVLTSKYR (141 aa)). Residue Ser-3 is modified to Phosphoserine. An N6-succinyllysine modification is found at Lys-7. At Thr-8 the chain carries Phosphothreonine. Position 11 is an N6-succinyllysine (Lys-11). N6-acetyllysine; alternate is present on Lys-16. At Lys-16 the chain carries N6-succinyllysine; alternate. Residue Tyr-24 is modified to Phosphotyrosine. Ser-35 bears the Phosphoserine mark. N6-succinyllysine is present on Lys-40. Ser-49 carries the post-translational modification Phosphoserine. His-58 contacts O2. A heme b-binding site is contributed by His-87. Ser-102 carries the phosphoserine modification. Thr-108 carries the post-translational modification Phosphothreonine. Ser-124 is modified (phosphoserine). 2 positions are modified to phosphothreonine: Thr-134 and Thr-137. Ser-138 bears the Phosphoserine mark.

It belongs to the globin family. Heterotetramer of two alpha chains and two beta chains. As to expression, red blood cells.

Its function is as follows. Involved in oxygen transport from the lung to the various peripheral tissues. Functionally, hemopressin acts as an antagonist peptide of the cannabinoid receptor CNR1. Hemopressin-binding efficiently blocks cannabinoid receptor CNR1 and subsequent signaling. The chain is Hemoglobin subunit alpha (HBA) from Vulpes vulpes (Red fox).